A 281-amino-acid chain; its full sequence is NAD kinase (281 aa).

Asp61 serves as the catalytic Proton acceptor. Residues 61–62 (DG), 134–135 (ND), Arg145, Asp164, 175–180 (TAYSLS), and Gln234 contribute to the NAD(+) site.

This sequence belongs to the NAD kinase family. Requires a divalent metal cation as cofactor.

The protein resides in the cytoplasm. The catalysed reaction is NAD(+) + ATP = ADP + NADP(+) + H(+). Involved in the regulation of the intracellular balance of NAD and NADP, and is a key enzyme in the biosynthesis of NADP. Catalyzes specifically the phosphorylation on 2'-hydroxyl of the adenosine moiety of NAD to yield NADP. In Clostridium botulinum (strain Kyoto / Type A2), this protein is NAD kinase.